A 260-amino-acid polypeptide reads, in one-letter code: Putative cysteine-rich repeat secretory protein 23 (260 aa).

A signal peptide spans 1-31 (MSSSFVYKSLFLVPILAVVAMQLSFVQSVLS). 2 Gnk2-homologous domains span residues 38-136 (YLHH…NISY) and 142-254 (LPEQ…LYLF).

Belongs to the cysteine-rich repeat secretory protein family.

The protein localises to the secreted. In Arabidopsis thaliana (Mouse-ear cress), this protein is Putative cysteine-rich repeat secretory protein 23 (CRRSP23).